The primary structure comprises 231 residues: Large ribosomal subunit protein uL1 (231 aa).

This sequence belongs to the universal ribosomal protein uL1 family. As to quaternary structure, part of the 50S ribosomal subunit.

In terms of biological role, binds directly to 23S rRNA. The L1 stalk is quite mobile in the ribosome, and is involved in E site tRNA release. Its function is as follows. Protein L1 is also a translational repressor protein, it controls the translation of the L11 operon by binding to its mRNA. This Pseudomonas syringae pv. tomato (strain ATCC BAA-871 / DC3000) protein is Large ribosomal subunit protein uL1.